Consider the following 643-residue polypeptide: NADH-ubiquinone oxidoreductase chain 5 (643 aa).

Helical transmembrane passes span 7–27 (IIIL…VFFF), 64–84 (LLKT…IFNI), 114–134 (TFLS…YYYM), 140–160 (PNNF…LTST), 163–183 (IFLL…LISW), 208–228 (ILLF…PEIF), 230–250 (ISAP…AAAG), 277–297 (SSTM…LYAC), 301–321 (FNTW…TTAI), 338–358 (LGLM…FHIC), 398–418 (AACI…PGFY), 437–457 (IVLS…IIFF), 486–506 (ALGT…VPII), 511–531 (VLKT…ISIL), 555–575 (FYEN…SLSL), and 615–635 (YLLF…TTIS).

The protein belongs to the complex I subunit 5 family.

The protein resides in the mitochondrion inner membrane. It carries out the reaction a ubiquinone + NADH + 5 H(+)(in) = a ubiquinol + NAD(+) + 4 H(+)(out). Functionally, core subunit of the mitochondrial membrane respiratory chain NADH dehydrogenase (Complex I) that is believed to belong to the minimal assembly required for catalysis. Complex I functions in the transfer of electrons from NADH to the respiratory chain. The immediate electron acceptor for the enzyme is believed to be ubiquinone. This Patiria pectinifera (Starfish) protein is NADH-ubiquinone oxidoreductase chain 5 (ND5).